A 221-amino-acid chain; its full sequence is ATP-dependent dethiobiotin synthetase BioD (221 aa).

13 to 18 (DIGKTY) contributes to the ATP binding site. Residue threonine 17 participates in Mg(2+) binding. The active site involves lysine 38. Serine 42 lines the substrate pocket. ATP-binding positions include aspartate 51, 112–115 (EGSG), and 176–177 (NR). The Mg(2+) site is built by aspartate 51 and glutamate 112.

Belongs to the dethiobiotin synthetase family. In terms of assembly, homodimer. Requires Mg(2+) as cofactor.

It is found in the cytoplasm. It catalyses the reaction (7R,8S)-7,8-diammoniononanoate + CO2 + ATP = (4R,5S)-dethiobiotin + ADP + phosphate + 3 H(+). The protein operates within cofactor biosynthesis; biotin biosynthesis; biotin from 7,8-diaminononanoate: step 1/2. Functionally, catalyzes a mechanistically unusual reaction, the ATP-dependent insertion of CO2 between the N7 and N8 nitrogen atoms of 7,8-diaminopelargonic acid (DAPA, also called 7,8-diammoniononanoate) to form a ureido ring. The sequence is that of ATP-dependent dethiobiotin synthetase BioD from Brachyspira hyodysenteriae (strain ATCC 49526 / WA1).